The sequence spans 127 residues: Large ribosomal subunit protein bL12 (127 aa).

It belongs to the bacterial ribosomal protein bL12 family. As to quaternary structure, homodimer. Part of the ribosomal stalk of the 50S ribosomal subunit. Forms a multimeric L10(L12)X complex, where L10 forms an elongated spine to which 2 to 4 L12 dimers bind in a sequential fashion. Binds GTP-bound translation factors.

Forms part of the ribosomal stalk which helps the ribosome interact with GTP-bound translation factors. Is thus essential for accurate translation. The protein is Large ribosomal subunit protein bL12 of Sinorhizobium fredii (strain NBRC 101917 / NGR234).